A 280-amino-acid polypeptide reads, in one-letter code: Diaminopimelate epimerase (280 aa).

Substrate-binding residues include Asn-13 and Asn-66. Catalysis depends on Cys-75, which acts as the Proton donor. Substrate is bound by residues Gly-76–Asn-77, Asn-162, Asn-195, and Glu-213–Arg-214. Cys-222 serves as the catalytic Proton acceptor. Gly-223–Thr-224 contacts substrate.

This sequence belongs to the diaminopimelate epimerase family. In terms of assembly, homodimer.

The protein localises to the cytoplasm. It catalyses the reaction (2S,6S)-2,6-diaminopimelate = meso-2,6-diaminopimelate. The protein operates within amino-acid biosynthesis; L-lysine biosynthesis via DAP pathway; DL-2,6-diaminopimelate from LL-2,6-diaminopimelate: step 1/1. In terms of biological role, catalyzes the stereoinversion of LL-2,6-diaminopimelate (L,L-DAP) to meso-diaminopimelate (meso-DAP), a precursor of L-lysine and an essential component of the bacterial peptidoglycan. This Synechococcus elongatus (strain ATCC 33912 / PCC 7942 / FACHB-805) (Anacystis nidulans R2) protein is Diaminopimelate epimerase.